A 393-amino-acid chain; its full sequence is NAD(P)H-quinone oxidoreductase subunit H, chloroplastic (393 aa).

It belongs to the complex I 49 kDa subunit family. In terms of assembly, NDH is composed of at least 16 different subunits, 5 of which are encoded in the nucleus.

Its subcellular location is the plastid. It is found in the chloroplast thylakoid membrane. It carries out the reaction a plastoquinone + NADH + (n+1) H(+)(in) = a plastoquinol + NAD(+) + n H(+)(out). The catalysed reaction is a plastoquinone + NADPH + (n+1) H(+)(in) = a plastoquinol + NADP(+) + n H(+)(out). Its function is as follows. NDH shuttles electrons from NAD(P)H:plastoquinone, via FMN and iron-sulfur (Fe-S) centers, to quinones in the photosynthetic chain and possibly in a chloroplast respiratory chain. The immediate electron acceptor for the enzyme in this species is believed to be plastoquinone. Couples the redox reaction to proton translocation, and thus conserves the redox energy in a proton gradient. This is NAD(P)H-quinone oxidoreductase subunit H, chloroplastic from Drimys granadensis.